The sequence spans 338 residues: Biotin synthase (338 aa).

One can recognise a Radical SAM core domain in the interval 45–272 (DEVQMSTLLS…QSVVRLSAGR (228 aa)). Residues Cys60, Cys64, and Cys67 each coordinate [4Fe-4S] cluster. The [2Fe-2S] cluster site is built by Cys104, Cys135, Cys195, and Arg267.

Belongs to the radical SAM superfamily. Biotin synthase family. Homodimer. It depends on [4Fe-4S] cluster as a cofactor. Requires [2Fe-2S] cluster as cofactor.

The catalysed reaction is (4R,5S)-dethiobiotin + (sulfur carrier)-SH + 2 reduced [2Fe-2S]-[ferredoxin] + 2 S-adenosyl-L-methionine = (sulfur carrier)-H + biotin + 2 5'-deoxyadenosine + 2 L-methionine + 2 oxidized [2Fe-2S]-[ferredoxin]. The protein operates within cofactor biosynthesis; biotin biosynthesis; biotin from 7,8-diaminononanoate: step 2/2. In terms of biological role, catalyzes the conversion of dethiobiotin (DTB) to biotin by the insertion of a sulfur atom into dethiobiotin via a radical-based mechanism. The chain is Biotin synthase from Parvibaculum lavamentivorans (strain DS-1 / DSM 13023 / NCIMB 13966).